Consider the following 261-residue polypeptide: MLICNDKSNPKTLLEEIMALRPWRKGPFEISQIKIDSEWDSSIKWDLVKNATPLKDKVVADVGCNNGYYLFKMLEHGPKSLVGFDPGVLVKKQFEFLAPFFDKEKKIIYESLGVEDLHEKYPNAFDVIFCLGVLYHRKSPLEALKALYHALKMSGELVLDTLIIDSPLDIALCPKKTYAKMKNVYFIPSVSALKGWCERVGFENFEILSVLKTTPKEQRKTDFILGQSLEDFLDKTDPSKTLEGYDAPLRGYFKMLKPSKL.

Residues Lys25, Trp39, Lys44, Gly63, 114–115 (VE), Tyr135, and Arg250 each bind carboxy-S-adenosyl-L-methionine.

The protein belongs to the class I-like SAM-binding methyltransferase superfamily. CmoB family. As to quaternary structure, homotetramer.

It carries out the reaction carboxy-S-adenosyl-L-methionine + 5-hydroxyuridine(34) in tRNA = 5-carboxymethoxyuridine(34) in tRNA + S-adenosyl-L-homocysteine + H(+). Functionally, catalyzes carboxymethyl transfer from carboxy-S-adenosyl-L-methionine (Cx-SAM) to 5-hydroxyuridine (ho5U) to form 5-carboxymethoxyuridine (cmo5U) at position 34 in tRNAs. The sequence is that of tRNA U34 carboxymethyltransferase from Helicobacter pylori (strain Shi470).